We begin with the raw amino-acid sequence, 363 residues long: 3-isopropylmalate dehydrogenase (363 aa).

78–91 (GPKWEHLPPDQQPE) lines the NAD(+) pocket. Positions 99, 109, 138, and 227 each coordinate substrate. Mg(2+) is bound by residues Asp-227, Asp-251, and Asp-255. 285–297 (GSAPDIAGKNIAN) serves as a coordination point for NAD(+).

The protein belongs to the isocitrate and isopropylmalate dehydrogenases family. LeuB type 1 subfamily. Homodimer. It depends on Mg(2+) as a cofactor. The cofactor is Mn(2+).

Its subcellular location is the cytoplasm. The enzyme catalyses (2R,3S)-3-isopropylmalate + NAD(+) = 4-methyl-2-oxopentanoate + CO2 + NADH. It functions in the pathway amino-acid biosynthesis; L-leucine biosynthesis; L-leucine from 3-methyl-2-oxobutanoate: step 3/4. Requires K(+) ions for optimum activity. Catalyzes the oxidation of 3-carboxy-2-hydroxy-4-methylpentanoate (3-isopropylmalate) to 3-carboxy-4-methyl-2-oxopentanoate. The product decarboxylates to 4-methyl-2 oxopentanoate. The protein is 3-isopropylmalate dehydrogenase of Escherichia coli (strain K12).